We begin with the raw amino-acid sequence, 222 residues long: Thiamine-phosphate synthase (222 aa).

Residues 40 to 44 (QLRDK) and Asn-81 each bind 4-amino-2-methyl-5-(diphosphooxymethyl)pyrimidine. Asp-82 and Asp-101 together coordinate Mg(2+). Residue Ser-120 participates in 4-amino-2-methyl-5-(diphosphooxymethyl)pyrimidine binding. Residue 146-148 (TPT) coordinates 2-[(2R,5Z)-2-carboxy-4-methylthiazol-5(2H)-ylidene]ethyl phosphate. A 4-amino-2-methyl-5-(diphosphooxymethyl)pyrimidine-binding site is contributed by Lys-149. Gly-178 serves as a coordination point for 2-[(2R,5Z)-2-carboxy-4-methylthiazol-5(2H)-ylidene]ethyl phosphate.

It belongs to the thiamine-phosphate synthase family. It depends on Mg(2+) as a cofactor.

It catalyses the reaction 2-[(2R,5Z)-2-carboxy-4-methylthiazol-5(2H)-ylidene]ethyl phosphate + 4-amino-2-methyl-5-(diphosphooxymethyl)pyrimidine + 2 H(+) = thiamine phosphate + CO2 + diphosphate. It carries out the reaction 2-(2-carboxy-4-methylthiazol-5-yl)ethyl phosphate + 4-amino-2-methyl-5-(diphosphooxymethyl)pyrimidine + 2 H(+) = thiamine phosphate + CO2 + diphosphate. The enzyme catalyses 4-methyl-5-(2-phosphooxyethyl)-thiazole + 4-amino-2-methyl-5-(diphosphooxymethyl)pyrimidine + H(+) = thiamine phosphate + diphosphate. The protein operates within cofactor biosynthesis; thiamine diphosphate biosynthesis; thiamine phosphate from 4-amino-2-methyl-5-diphosphomethylpyrimidine and 4-methyl-5-(2-phosphoethyl)-thiazole: step 1/1. In terms of biological role, condenses 4-methyl-5-(beta-hydroxyethyl)thiazole monophosphate (THZ-P) and 2-methyl-4-amino-5-hydroxymethyl pyrimidine pyrophosphate (HMP-PP) to form thiamine monophosphate (TMP). This is Thiamine-phosphate synthase from Mycobacterium tuberculosis (strain ATCC 25177 / H37Ra).